Here is a 57-residue protein sequence, read N- to C-terminus: Phosphatase RapH inhibitor (57 aa).

2 propeptides span residues 1–34 (MPIKKKVMMCLAVTLVFGSMSFPTLTNSGGFKES) and 41–57 (YIDHSPYKLSDQKKALS). Positions 26-57 (TNSGGFKESTDRNTTYIDHSPYKLSDQKKALS) are disordered.

This sequence belongs to the Phr family. Post-translationally, contains a predicted signal peptide cleavage site in the N-terminal region, however the propeptide is probably only subject to processing events at the ends of the mature peptide.

It is found in the secreted. It localises to the cytoplasm. Functionally, signaling molecule involved the regulation of both sporulation and competence. Secreted during production, but the mature peptide acts intracellularly, indicating that it needs to be imported into the cell to function. Acts by inhibiting RapH activity. Can inhibit both RapH activities, the dephosphorylation of Spo0F and the sequestration of ComA. The chain is Phosphatase RapH inhibitor (phrH) from Bacillus subtilis (strain 168).